Consider the following 350-residue polypeptide: Phosphoribosylformylglycinamidine cyclo-ligase (350 aa).

The protein belongs to the AIR synthase family.

Its subcellular location is the cytoplasm. The enzyme catalyses 2-formamido-N(1)-(5-O-phospho-beta-D-ribosyl)acetamidine + ATP = 5-amino-1-(5-phospho-beta-D-ribosyl)imidazole + ADP + phosphate + H(+). The protein operates within purine metabolism; IMP biosynthesis via de novo pathway; 5-amino-1-(5-phospho-D-ribosyl)imidazole from N(2)-formyl-N(1)-(5-phospho-D-ribosyl)glycinamide: step 2/2. This chain is Phosphoribosylformylglycinamidine cyclo-ligase, found in Syntrophotalea carbinolica (strain DSM 2380 / NBRC 103641 / GraBd1) (Pelobacter carbinolicus).